Consider the following 90-residue polypeptide: Putative large ribosomal subunit protein uL23c (90 aa).

The tract at residues 1–46 (MDGIKYAVFTDKSIQLLGKKQYTSNVESRSTRTEIKHWVELWNSYE) is coded by first part of gene. A coded by second part of gene region spans residues 47-90 (MNSHRLPGKGRRMGPIMGHTMHYRRMIITLQSSYSIPPLRKKRT).

Belongs to the universal ribosomal protein uL23 family. As to quaternary structure, part of the 50S ribosomal subunit.

It is found in the plastid. The protein localises to the chloroplast. Binds to 23S rRNA. In Spinacia oleracea (Spinach), this protein is Putative large ribosomal subunit protein uL23c (rpl23).